The sequence spans 170 residues: Large ribosomal subunit protein uL18m (170 aa).

Belongs to the universal ribosomal protein uL18 family. Component of the mitochondrial ribosome large subunit (39S) which comprises a 16S rRNA and about 50 distinct proteins.

Its subcellular location is the mitochondrion. This is Large ribosomal subunit protein uL18m (mrpl-18) from Caenorhabditis elegans.